A 170-amino-acid polypeptide reads, in one-letter code: Shikimate kinase (170 aa).

11-16 (GAGKTT) lines the ATP pocket. Threonine 15 is a binding site for Mg(2+). 3 residues coordinate substrate: aspartate 33, arginine 57, and glycine 80. Residue arginine 119 coordinates ATP. Residue arginine 141 coordinates substrate.

This sequence belongs to the shikimate kinase family. Monomer. Mg(2+) is required as a cofactor.

Its subcellular location is the cytoplasm. It catalyses the reaction shikimate + ATP = 3-phosphoshikimate + ADP + H(+). Its pathway is metabolic intermediate biosynthesis; chorismate biosynthesis; chorismate from D-erythrose 4-phosphate and phosphoenolpyruvate: step 5/7. In terms of biological role, catalyzes the specific phosphorylation of the 3-hydroxyl group of shikimic acid using ATP as a cosubstrate. This chain is Shikimate kinase, found in Azobacteroides pseudotrichonymphae genomovar. CFP2.